Here is a 418-residue protein sequence, read N- to C-terminus: Histidine--tRNA ligase (418 aa).

The protein belongs to the class-II aminoacyl-tRNA synthetase family.

The protein resides in the cytoplasm. It catalyses the reaction tRNA(His) + L-histidine + ATP = L-histidyl-tRNA(His) + AMP + diphosphate + H(+). This Methanococcus aeolicus (strain ATCC BAA-1280 / DSM 17508 / OCM 812 / Nankai-3) protein is Histidine--tRNA ligase.